Here is a 100-residue protein sequence, read N- to C-terminus: Large ribosomal subunit protein bL21 (100 aa).

It belongs to the bacterial ribosomal protein bL21 family. In terms of assembly, part of the 50S ribosomal subunit. Contacts protein L20.

Its function is as follows. This protein binds to 23S rRNA in the presence of protein L20. This is Large ribosomal subunit protein bL21 from Mycoplasma genitalium (strain ATCC 33530 / DSM 19775 / NCTC 10195 / G37) (Mycoplasmoides genitalium).